The primary structure comprises 239 residues: Ribonuclease P protein component 3 (239 aa).

It belongs to the eukaryotic/archaeal RNase P protein component 3 family. In terms of assembly, consists of a catalytic RNA component and at least 4-5 protein subunits.

Its subcellular location is the cytoplasm. The catalysed reaction is Endonucleolytic cleavage of RNA, removing 5'-extranucleotides from tRNA precursor.. In terms of biological role, part of ribonuclease P, a protein complex that generates mature tRNA molecules by cleaving their 5'-ends. The sequence is that of Ribonuclease P protein component 3 from Methanosarcina acetivorans (strain ATCC 35395 / DSM 2834 / JCM 12185 / C2A).